A 373-amino-acid polypeptide reads, in one-letter code: RNA cytidine acetyltransferase (373 aa).

Arg53 serves as a coordination point for ATP. Acetyl-CoA is bound by residues Ile216 to Thr218 and Thr223 to Ser229. The interval Gly246 to Glu271 is disordered. Residue Arg313 coordinates acetyl-CoA.

It belongs to the RNA cytidine acetyltransferase family. NAT10 subfamily.

It is found in the nucleus. Its subcellular location is the nucleolus. It carries out the reaction a cytidine in 18S rRNA + acetyl-CoA + ATP + H2O = an N(4)-acetylcytidine in 18S rRNA + ADP + phosphate + CoA + H(+). The enzyme catalyses a cytidine in tRNA + acetyl-CoA + ATP + H2O = an N(4)-acetylcytidine in tRNA + ADP + phosphate + CoA + H(+). Functionally, RNA cytidine acetyltransferase with specificity toward both 18S rRNA and tRNAs. Catalyzes the formation of N(4)-acetylcytidine (ac4C) in 18S rRNA. Required for early nucleolar cleavages of precursor rRNA at sites A0, A1 and A2 during 18S rRNA synthesis. Catalyzes the formation of ac4C in serine and leucine tRNAs. Requires a tRNA-binding adapter protein for full tRNA acetyltransferase activity but not for 18S rRNA acetylation. This is RNA cytidine acetyltransferase from Achlya ambisexualis (Water mold).